The chain runs to 271 residues: Phosphonates import ATP-binding protein PhnC 2 (271 aa).

Positions 2–245 (LTIDKLTKRF…VARDIYGAGA (244 aa)) constitute an ABC transporter domain. An ATP-binding site is contributed by 34-41 (GRSGAGKS).

This sequence belongs to the ABC transporter superfamily. Phosphonates importer (TC 3.A.1.9.1) family. The complex is composed of two ATP-binding proteins (PhnC), two transmembrane proteins (PhnE) and a solute-binding protein (PhnD).

Its subcellular location is the cell inner membrane. It catalyses the reaction phosphonate(out) + ATP + H2O = phosphonate(in) + ADP + phosphate + H(+). Part of the ABC transporter complex PhnCDE involved in phosphonates import. Responsible for energy coupling to the transport system. This chain is Phosphonates import ATP-binding protein PhnC 2, found in Roseobacter denitrificans (strain ATCC 33942 / OCh 114) (Erythrobacter sp. (strain OCh 114)).